We begin with the raw amino-acid sequence, 390 residues long: MSDLENFVPTANIKVIGVGGGGNNSVETMIQAGIQGVEFIVANTDIQALQRSSAPNFIHLGENKRGLGAGANPEVGKKAAEESIVEIKEKLKGADMVIITSGMGGGTGTGASPIIAKIARELGALTISIVTTPFEFEGNLRNKNAQEGIKNLRAVSDSIIIISNNKLLEQYGDAPMKDSFLFADTILKHTVKTITDIIAIPAHINLDFADVKTVMKDKGDALIGIGRASGKDRAVKAAIHAISSPIIETSIQGASHTIINITGSANLTLTEVHSAVNVIKNAVGPEMNTIFGATINESIGDEIYVSVIATGLSSSKKFNSEQEIKDEVSSMLKTMEIDLQASETKTILINDPLPKDEKMVLTSLLDRDSKILEKDDSQDDTLPFFLKRNV.

Residues 20–24 (GGGNN), 106–108 (GTG), Glu137, Arg141, and Asp184 each bind GTP.

The protein belongs to the FtsZ family. As to quaternary structure, homodimer. Polymerizes to form a dynamic ring structure in a strictly GTP-dependent manner. Interacts directly with several other division proteins.

Its subcellular location is the cytoplasm. Functionally, essential cell division protein that forms a contractile ring structure (Z ring) at the future cell division site. The regulation of the ring assembly controls the timing and the location of cell division. One of the functions of the FtsZ ring is to recruit other cell division proteins to the septum to produce a new cell wall between the dividing cells. Binds GTP and shows GTPase activity. The sequence is that of Cell division protein FtsZ from Mycoplasmopsis pulmonis (strain UAB CTIP) (Mycoplasma pulmonis).